The following is a 711-amino-acid chain: Polyribonucleotide nucleotidyltransferase (711 aa).

Residues Asp486 and Asp492 each contribute to the Mg(2+) site. One can recognise a KH domain in the interval 553–612; the sequence is PRIHTIKISTDKIKDVIGKGGSVIRALTEETGTTIEIEDDGTVKIAATDGEKAKYAIRRI. Residues 622 to 690 enclose the S1 motif domain; sequence GRIYNGKVTR…RQGRVRLSIK (69 aa). Positions 690-711 are disordered; sequence KEATEQSQPAAAPEAPASEQAE. Over residues 694 to 711 the composition is skewed to low complexity; that stretch reads EQSQPAAAPEAPASEQAE.

Belongs to the polyribonucleotide nucleotidyltransferase family. As to quaternary structure, component of the RNA degradosome, which is a multiprotein complex involved in RNA processing and mRNA degradation. Mg(2+) serves as cofactor.

It localises to the cytoplasm. It catalyses the reaction RNA(n+1) + phosphate = RNA(n) + a ribonucleoside 5'-diphosphate. Functionally, involved in mRNA degradation. Catalyzes the phosphorolysis of single-stranded polyribonucleotides processively in the 3'- to 5'-direction. The protein is Polyribonucleotide nucleotidyltransferase of Salmonella choleraesuis (strain SC-B67).